Reading from the N-terminus, the 272-residue chain is Ethanolamine ammonia-lyase small subunit (272 aa).

Residues Val-161, Glu-182, and Cys-211 each contribute to the adenosylcob(III)alamin site.

The protein belongs to the EutC family. In terms of assembly, the basic unit is a heterodimer which dimerizes to form tetramers. The heterotetramers trimerize; 6 large subunits form a core ring with 6 small subunits projecting outwards. The cofactor is adenosylcob(III)alamin.

Its subcellular location is the bacterial microcompartment. It catalyses the reaction ethanolamine = acetaldehyde + NH4(+). It participates in amine and polyamine degradation; ethanolamine degradation. In terms of biological role, catalyzes the deamination of various vicinal amino-alcohols to oxo compounds. Allows this organism to utilize ethanolamine as the sole source of nitrogen and carbon in the presence of external vitamin B12. The protein is Ethanolamine ammonia-lyase small subunit of Pseudomonas putida (strain W619).